The sequence spans 258 residues: Imidazole glycerol phosphate synthase subunit HisF (258 aa).

Residues Asp-12 and Asp-131 contribute to the active site.

Belongs to the HisA/HisF family. Heterodimer of HisH and HisF.

It localises to the cytoplasm. It catalyses the reaction 5-[(5-phospho-1-deoxy-D-ribulos-1-ylimino)methylamino]-1-(5-phospho-beta-D-ribosyl)imidazole-4-carboxamide + L-glutamine = D-erythro-1-(imidazol-4-yl)glycerol 3-phosphate + 5-amino-1-(5-phospho-beta-D-ribosyl)imidazole-4-carboxamide + L-glutamate + H(+). Its pathway is amino-acid biosynthesis; L-histidine biosynthesis; L-histidine from 5-phospho-alpha-D-ribose 1-diphosphate: step 5/9. In terms of biological role, IGPS catalyzes the conversion of PRFAR and glutamine to IGP, AICAR and glutamate. The HisF subunit catalyzes the cyclization activity that produces IGP and AICAR from PRFAR using the ammonia provided by the HisH subunit. In Sinorhizobium fredii (strain NBRC 101917 / NGR234), this protein is Imidazole glycerol phosphate synthase subunit HisF.